Here is a 261-residue protein sequence, read N- to C-terminus: 5-oxoprolinase subunit A (261 aa).

The protein belongs to the LamB/PxpA family. Forms a complex composed of PxpA, PxpB and PxpC.

It carries out the reaction 5-oxo-L-proline + ATP + 2 H2O = L-glutamate + ADP + phosphate + H(+). Functionally, catalyzes the cleavage of 5-oxoproline to form L-glutamate coupled to the hydrolysis of ATP to ADP and inorganic phosphate. The protein is 5-oxoprolinase subunit A of Symbiobacterium thermophilum (strain DSM 24528 / JCM 14929 / IAM 14863 / T).